A 153-amino-acid polypeptide reads, in one-letter code: UPF0266 membrane protein YPTB1631 (153 aa).

Helical transmembrane passes span 6 to 26 (LVLV…EFIM), 45 to 65 (LDCM…VMAH), and 67 to 87 (APLT…ISYI).

This sequence belongs to the UPF0266 family.

The protein localises to the cell inner membrane. This chain is UPF0266 membrane protein YPTB1631, found in Yersinia pseudotuberculosis serotype I (strain IP32953).